The sequence spans 507 residues: ATP synthase subunit alpha, chloroplastic (507 aa).

ATP is bound at residue 170-177; that stretch reads GDRQTGKT.

It belongs to the ATPase alpha/beta chains family. As to quaternary structure, F-type ATPases have 2 components, CF(1) - the catalytic core - and CF(0) - the membrane proton channel. CF(1) has five subunits: alpha(3), beta(3), gamma(1), delta(1), epsilon(1). CF(0) has four main subunits: a, b, b' and c.

It is found in the plastid. It localises to the chloroplast thylakoid membrane. The catalysed reaction is ATP + H2O + 4 H(+)(in) = ADP + phosphate + 5 H(+)(out). Functionally, produces ATP from ADP in the presence of a proton gradient across the membrane. The alpha chain is a regulatory subunit. The sequence is that of ATP synthase subunit alpha, chloroplastic from Cucumis sativus (Cucumber).